We begin with the raw amino-acid sequence, 189 residues long: Phomopsin biosynthesis cluster protein C' (189 aa).

The protein belongs to the oryJ family.

Its function is as follows. Part of the gene cluster that mediates the biosynthesis of the phomopsins, a group of hexapeptide mycotoxins which infects lupins and causes lupinosis disease in livestock. The role of phomC' within the phomopsins biosynthesis pathway has still to be determined. The pathway starts with the processing of the precursor phomA by several endopeptidases including kexin proteases as well as the cluster-specific S41 family peptidase phomP1 and the oligopeptidase phomG to produce 10 identical copies of the hexapeptide Tyr-Val-Ile-Pro-Ile-Asp. After being excised from the precursor peptide, the core peptides are cyclized and modified post-translationally by enzymes encoded within the gene cluster. The timing and order of proteolysis of the phomA precursor and PTMs are still unknown. Two tyrosinase-like enzymes, phomQ1 and phomQ2, catalyze the chlorination and hydroxylation of Tyr, respectively. PhomYb, is proposed to be involved in the construction of the macrocyclic structure. The other 4 ustYa family proteins may be involved in PTMs that generate the unique structure of phomopsin A. PhomYa is required for the hydroxylation of C-beta of Tyr. PhomYc, phomYd, and phomYe are responsible for the biosynthesis of 2,3-dehydroisoleucine (dIle), 2,3-dehydroaspartic acid (dAsp), and 3,4-dehydroproline (dPro), respectively. While dIle formation by phomYc is indispensable for the installation of dAsp by phomYd, the order of the other PTMs have not been elucidated yet. Most of the biosynthetic enzymes likely have broad substrate specificity, and thus, there might be a metabolic grid from a precursor to phomopsin A. The enzyme(s) responsible for the biosynthesis of 3,4-dehydrovaline (dVal) have also not been identified yet. Finally, phomM acts as an S-adenosylmethionine-dependent alpha-N-methyltransferase that catalyzes two successive N-methylation reactions, converting N-desmethyl-phomopsin A to phomopsin A and phomopsin A further to an N,N-dimethylated congener called phomopsin E. The protein is Phomopsin biosynthesis cluster protein C' of Diaporthe leptostromiformis (Lupinosis disease fungus).